Reading from the N-terminus, the 322-residue chain is Homoserine kinase (322 aa).

107–117 lines the ATP pocket; the sequence is PLSSGMGGSAA.

Belongs to the GHMP kinase family. Homoserine kinase subfamily.

It localises to the cytoplasm. It catalyses the reaction L-homoserine + ATP = O-phospho-L-homoserine + ADP + H(+). The protein operates within amino-acid biosynthesis; L-threonine biosynthesis; L-threonine from L-aspartate: step 4/5. Catalyzes the ATP-dependent phosphorylation of L-homoserine to L-homoserine phosphate. The polypeptide is Homoserine kinase (Xylella fastidiosa (strain M23)).